The sequence spans 126 residues: Aspartate 1-decarboxylase (126 aa).

Catalysis depends on S25, which acts as the Schiff-base intermediate with substrate; via pyruvic acid. Position 25 is a pyruvic acid (Ser) (S25). A substrate-binding site is contributed by T57. Y58 serves as the catalytic Proton donor. 73–75 (GAA) is a substrate binding site.

It belongs to the PanD family. In terms of assembly, heterooctamer of four alpha and four beta subunits. Pyruvate serves as cofactor. In terms of processing, is synthesized initially as an inactive proenzyme, which is activated by self-cleavage at a specific serine bond to produce a beta-subunit with a hydroxyl group at its C-terminus and an alpha-subunit with a pyruvoyl group at its N-terminus.

It is found in the cytoplasm. The catalysed reaction is L-aspartate + H(+) = beta-alanine + CO2. Its pathway is cofactor biosynthesis; (R)-pantothenate biosynthesis; beta-alanine from L-aspartate: step 1/1. Functionally, catalyzes the pyruvoyl-dependent decarboxylation of aspartate to produce beta-alanine. The chain is Aspartate 1-decarboxylase from Alcanivorax borkumensis (strain ATCC 700651 / DSM 11573 / NCIMB 13689 / SK2).